Here is a 469-residue protein sequence, read N- to C-terminus: Serine hydroxymethyltransferase, cytosolic (469 aa).

Lysine 248 bears the N6-(pyridoxal phosphate)lysine mark.

The protein belongs to the SHMT family. Homotetramer. It depends on pyridoxal 5'-phosphate as a cofactor.

The protein localises to the cytoplasm. The catalysed reaction is (6R)-5,10-methylene-5,6,7,8-tetrahydrofolate + glycine + H2O = (6S)-5,6,7,8-tetrahydrofolate + L-serine. It functions in the pathway one-carbon metabolism; tetrahydrofolate interconversion. Its function is as follows. Interconversion of serine and glycine. The polypeptide is Serine hydroxymethyltransferase, cytosolic (SHM2) (Candida glabrata (strain ATCC 2001 / BCRC 20586 / JCM 3761 / NBRC 0622 / NRRL Y-65 / CBS 138) (Yeast)).